We begin with the raw amino-acid sequence, 320 residues long: Ribosomal RNA small subunit methyltransferase H (320 aa).

Residues 36–38 (GGH), Asp-56, Phe-82, Asp-103, and Gln-110 each bind S-adenosyl-L-methionine.

It belongs to the methyltransferase superfamily. RsmH family.

It localises to the cytoplasm. The enzyme catalyses cytidine(1402) in 16S rRNA + S-adenosyl-L-methionine = N(4)-methylcytidine(1402) in 16S rRNA + S-adenosyl-L-homocysteine + H(+). Functionally, specifically methylates the N4 position of cytidine in position 1402 (C1402) of 16S rRNA. This chain is Ribosomal RNA small subunit methyltransferase H, found in Chromobacterium violaceum (strain ATCC 12472 / DSM 30191 / JCM 1249 / CCUG 213 / NBRC 12614 / NCIMB 9131 / NCTC 9757 / MK).